We begin with the raw amino-acid sequence, 948 residues long: MKEPSIVVKGARAHNLKDIDIELPKNKLIVMTGLSGSGKSSLAFDTIYAEGQRRYVESLSAYARQFLGQMDKPDVDTIEGLSPAISIDQKTTSKNPRSTVATVTEIYDYIRLLYARVGKPYCPNHNIEIESQTVQQMVDRIMELEARTKIQLLAPVIAHRKGSHEKLIEDIGKKGYVRLRIDGEIVDVNDVPTLDKNKNHTIEVVVDRLVVKDGIETRLADSIETALELSEGQLTVDVIDGEDLKFSESHACPICGFSIGELEPRMFSFNSPFGACPTCDGLGQKLTVDVDLVVPDKDKTLNEGAIEPWIPTSSDFYPTLLKRVCEVYKINMDKPFKKLTERQRDILLYGSGDKEIEFTFTQRQGGTRKRTMVFEGVVPNISRRFHESPSEYTREMMSKYMTELPCETCHGKRLSREALSVYVGGLNIGEVVEYSISQALNYYKNIDLSEQDQAIANQILKEIISRLTFLNNVGLEYLTLNRASGTLSGGEAQRIRLATQIGSRLTGVLYVLDEPSIGLHQRDNDRLINTLKEMRDLGNTLIVVEHDDDTMRAADYLVDIGPGAGEHGGQIVSSGTPQKVMKDKKSLTGQYLSGKKRIEVPEYRRPASDRKISIRGARSNNLKGVDVDIPLSIMTVVTGVSGSGKSSLVNEVLYKSLAQKINKSKVKPGLYDKIEGIDQLDKIIDIDQSPIGRTPRSNPATYTGVFDDIRDVFAQTNEAKIRGYQKGRFSFNVKGGRCEACKGDGIIKIEMHFLPDVYVPCEVCDGKRYNRETLEVTYKGKNIADILEMTVEEATQFFENIPKIKRKLQTLVDVGLGYVTLGQQATTLSGGEAQRVKLASELHKRSTGKSIYILDEPTTGLHVDDISRLLKVLNRLVENGDTVVIIEHNLDVIKTADYIIDLGPEGGSGGGTIVATGTPEDIAQTKSSYTGKYLKEVLERDKQNTEDK.

Position 33–40 (33–40 (GLSGSGKS)) interacts with ATP. A C4-type zinc finger spans residues 252–279 (CPICGFSIGELEPRMFSFNSPFGACPTC). 2 consecutive ABC transporter domains span residues 309 to 587 (WIPT…KKSL) and 607 to 935 (ASDR…KYLK). Residue 639 to 646 (GVSGSGKS) coordinates ATP. The C4-type zinc finger occupies 738–764 (CEACKGDGIIKIEMHFLPDVYVPCEVC).

It belongs to the ABC transporter superfamily. UvrA family. Forms a heterotetramer with UvrB during the search for lesions.

Its subcellular location is the cytoplasm. Functionally, the UvrABC repair system catalyzes the recognition and processing of DNA lesions. UvrA is an ATPase and a DNA-binding protein. A damage recognition complex composed of 2 UvrA and 2 UvrB subunits scans DNA for abnormalities. When the presence of a lesion has been verified by UvrB, the UvrA molecules dissociate. The sequence is that of UvrABC system protein A from Staphylococcus aureus (strain MSSA476).